A 99-amino-acid polypeptide reads, in one-letter code: NADH-quinone oxidoreductase subunit K (99 aa).

3 helical membrane-spanning segments follow: residues 3 to 23 (PDNY…GVLL), 28 to 48 (IVVF…FVAF), and 59 to 79 (VVAF…LAII).

The protein belongs to the complex I subunit 4L family. As to quaternary structure, NDH-1 is composed of 14 different subunits. Subunits NuoA, H, J, K, L, M, N constitute the membrane sector of the complex.

Its subcellular location is the cell membrane. It carries out the reaction a quinone + NADH + 5 H(+)(in) = a quinol + NAD(+) + 4 H(+)(out). In terms of biological role, NDH-1 shuttles electrons from NADH, via FMN and iron-sulfur (Fe-S) centers, to quinones in the respiratory chain. The immediate electron acceptor for the enzyme in this species is believed to be a menaquinone. Couples the redox reaction to proton translocation (for every two electrons transferred, four hydrogen ions are translocated across the cytoplasmic membrane), and thus conserves the redox energy in a proton gradient. This chain is NADH-quinone oxidoreductase subunit K, found in Mycobacterium sp. (strain KMS).